Here is a 180-residue protein sequence, read N- to C-terminus: Translation initiation factor IF-3 (180 aa).

This sequence belongs to the IF-3 family. In terms of assembly, monomer.

It localises to the cytoplasm. In terms of biological role, IF-3 binds to the 30S ribosomal subunit and shifts the equilibrium between 70S ribosomes and their 50S and 30S subunits in favor of the free subunits, thus enhancing the availability of 30S subunits on which protein synthesis initiation begins. The protein is Translation initiation factor IF-3 of Salmonella typhimurium (strain LT2 / SGSC1412 / ATCC 700720).